Consider the following 529-residue polypeptide: DEP domain-containing protein 1B (529 aa).

The 85-residue stretch at 24–108 folds into the DEP domain; that stretch reads FRAGMPLRKH…DDGHLYRFPP (85 aa). In terms of domain architecture, Rho-GAP spans 192 to 393; sequence ARLQKVLGLD…FLMDNYQEIL (202 aa).

In Gallus gallus (Chicken), this protein is DEP domain-containing protein 1B (DEPDC1B).